Here is a 329-residue protein sequence, read N- to C-terminus: Ketol-acid reductoisomerase (NADP(+)) (329 aa).

Residues 2–181 (MKKYYESDAD…GATRAVVLET (180 aa)) form the KARI N-terminal Rossmann domain. Residues 25-28 (YGSQ), Arg-48, Ser-52, and 82-85 (DELQ) each bind NADP(+). Residue His-107 is part of the active site. Gly-133 serves as a coordination point for NADP(+). Positions 182–327 (TFREETETDL…KEVRAMMPQF (146 aa)) constitute a KARI C-terminal knotted domain. Mg(2+) is bound by residues Asp-190, Glu-194, Glu-226, and Glu-230. Residue Ser-251 participates in substrate binding.

The protein belongs to the ketol-acid reductoisomerase family. The cofactor is Mg(2+).

It catalyses the reaction (2R)-2,3-dihydroxy-3-methylbutanoate + NADP(+) = (2S)-2-acetolactate + NADPH + H(+). The catalysed reaction is (2R,3R)-2,3-dihydroxy-3-methylpentanoate + NADP(+) = (S)-2-ethyl-2-hydroxy-3-oxobutanoate + NADPH + H(+). It participates in amino-acid biosynthesis; L-isoleucine biosynthesis; L-isoleucine from 2-oxobutanoate: step 2/4. The protein operates within amino-acid biosynthesis; L-valine biosynthesis; L-valine from pyruvate: step 2/4. Its function is as follows. Involved in the biosynthesis of branched-chain amino acids (BCAA). Catalyzes an alkyl-migration followed by a ketol-acid reduction of (S)-2-acetolactate (S2AL) to yield (R)-2,3-dihydroxy-isovalerate. In the isomerase reaction, S2AL is rearranged via a Mg-dependent methyl migration to produce 3-hydroxy-3-methyl-2-ketobutyrate (HMKB). In the reductase reaction, this 2-ketoacid undergoes a metal-dependent reduction by NADPH to yield (R)-2,3-dihydroxy-isovalerate. The polypeptide is Ketol-acid reductoisomerase (NADP(+)) (Methanoregula boonei (strain DSM 21154 / JCM 14090 / 6A8)).